The following is a 541-amino-acid chain: Protein wntless homolog B (541 aa).

Over 1-15 (MAGAIIENMSTKKLC) the chain is Cytoplasmic. A helical transmembrane segment spans residues 16–36 (MVGVALLLLQVLAFLVGGLIA). Residues 37 to 232 (PKPTTYVNPV…SIFQNGGFTM (196 aa)) are Lumenal-facing. The chain crosses the membrane as a helical span at residues 233 to 253 (VWFAMKTFLTPCIIIIMIWYW). Residues 254–268 (RRITMMTRSPVLLEK) are Cytoplasmic-facing. A helical membrane pass occupies residues 269–289 (VIFALGISMTFINIPVEWFSI). Residues 290–303 (GYDWTWMLLFGDIR) lie on the Lumenal side of the membrane. A helical transmembrane segment spans residues 304-324 (QGIFYAMLLSFWIIFCGEHMM). Residues 325-331 (DQAERNR) are Cytoplasmic-facing. A helical membrane pass occupies residues 332-352 (ISIYWKQVGPIAFGSCCLFIF). Residues 353–379 (DMCERGVQLKNPFYSIWTTDVGAEIAM) lie on the Lumenal side of the membrane. A helical membrane pass occupies residues 380–400 (AFIIVAGICACLYFLFLCFMV). Over 401–431 (YQVFRNISGKRSNLPAMSKARRLHYEGLIFR) the chain is Cytoplasmic. The chain crosses the membrane as a helical span at residues 432-452 (FKFLMIITLACAALTVVFFIT). Residues 453–471 (TQITEGNWKLGDLSIELNS) are Lumenal-facing. The chain crosses the membrane as a helical span at residues 472-492 (AFFTGIYGMWNLYVFALMFLY). Residues 493–541 (APSHKHYGDGQSNDGAGMSSGEELQLTTTITHIDGPTELYRLAGKEAQE) lie on the Cytoplasmic side of the membrane.

This sequence belongs to the wntless family. As to expression, enriched in the animal hemisphere of the early cleavage embryo, where expression persists until the late gastrula stage. At the neurula stage, strongly expressed at the border of the neural plate and dorsal midline. After the neurula stage, expressed in various organs, including the eye, liver, heart, pronephros, otic vesicle, and dorsal neural tube. Expression in the developing eye is dynamic; expressed in the eye field from stages 23 to 27, and from stage 30 expression is confined to distinct regions including the central part and border of the eye.

It is found in the golgi apparatus membrane. The protein resides in the cytoplasmic vesicle membrane. In terms of biological role, required for a subset of Wnt-dependent developmental processes, in particular, eye and pronephros development. Regulates the secretion of wnt4, which is required for eye development. The chain is Protein wntless homolog B (wls-b) from Xenopus laevis (African clawed frog).